Reading from the N-terminus, the 429-residue chain is UPF0053 protein YugS (429 aa).

A run of 4 helical transmembrane segments spans residues 1–21 (MLILQLIAIFVLIGITAVFVA), 61–81 (ACQLGITITALGLGWLGEPTF), 101–121 (IVTFVVAFIIVTFLHVVMGEL), and 133–153 (AVSLWIAKPLIWFYKITYPFI). Residues 1–201 (MLILQLIAIF…YEKGEINQSE (201 aa)) form the CNNM transmembrane domain. CBS domains lie at 220–281 (MIPR…PIKL) and 284–341 (IMRP…IRDE).

The protein belongs to the UPF0053 family.

Its subcellular location is the cell membrane. The polypeptide is UPF0053 protein YugS (yugS) (Bacillus subtilis (strain 168)).